Consider the following 536-residue polypeptide: DEAD-box ATP-dependent RNA helicase 41 (536 aa).

Over residues 1 to 10 the composition is skewed to basic and acidic residues; it reads MEQEENHSAD. Positions 1-25 are disordered; it reads MEQEENHSADHLSAQPGNGNELEES. An HIT-type zinc finger spans residues 40-69; the sequence is GEPRCVICGRYGEYICDQTDDDICSVECKT. The short motif at 137–165 is the Q motif element; sequence MCFSSSGLPEKLVLNLEAAGYVMPTPVQM. The 177-residue stretch at 168–344 folds into the Helicase ATP-binding domain; sequence IPSSICNRSL…NSLAKNAIHI (177 aa). Residue 181–188 coordinates ATP; sequence ADTGSGKT. Residues 293-296 carry the DEAD box motif; the sequence is DEVD. Residues 355–518 enclose the Helicase C-terminal domain; sequence SVKQVVIWVE…PIPRELANSK (164 aa).

This sequence belongs to the DEAD box helicase family. DDX59 subfamily.

The catalysed reaction is ATP + H2O = ADP + phosphate + H(+). This is DEAD-box ATP-dependent RNA helicase 41 from Oryza sativa subsp. japonica (Rice).